The sequence spans 477 residues: Stromelysin-1 (477 aa).

An N-terminal signal peptide occupies residues 1–17 (MKGLPVLLWLCVVVCSS). Positions 18–99 (YPLHDSARDD…PRCGVPDVGG (82 aa)) are cleaved as a propeptide — activation peptide. Positions 90–97 (PRCGVPDV) match the Cysteine switch motif. Residue cysteine 92 participates in Zn(2+) binding. Residues aspartate 124 and aspartate 158 each coordinate Ca(2+). Residues histidine 168 and aspartate 170 each contribute to the Zn(2+) site. The Ca(2+) site is built by aspartate 175, glycine 176, glycine 178, and valine 180. A Zn(2+)-binding site is contributed by histidine 183. Ca(2+) is bound by residues glycine 190, asparagine 192, and aspartate 194. A Zn(2+)-binding site is contributed by histidine 196. The Ca(2+) site is built by aspartate 198, aspartate 199, and glutamate 201. Residue histidine 218 participates in Zn(2+) binding. Residue glutamate 219 is part of the active site. Residues histidine 222 and histidine 228 each contribute to the Zn(2+) site. Hemopexin repeat units follow at residues 287 to 336 (SPMC…WPSL), 337 to 383 (PSNM…GLPA), 385 to 433 (VKKI…FPGV), and 434 to 477 (DSRV…WFNC). A disulfide bond links cysteine 290 and cysteine 477. Aspartate 297 serves as a coordination point for Ca(2+). Ca(2+)-binding residues include aspartate 389 and aspartate 438.

Belongs to the peptidase M10A family. Ca(2+) serves as cofactor. Zn(2+) is required as a cofactor.

The protein localises to the secreted. Its subcellular location is the extracellular space. The protein resides in the extracellular matrix. It catalyses the reaction Preferential cleavage where P1', P2' and P3' are hydrophobic residues.. In terms of biological role, metalloproteinase with a rather broad substrate specificity that can degrade fibronectin, laminin, gelatins of type I, III, IV, and V; collagens III, IV, X, and IX, and cartilage proteoglycans. Activates different molecules including growth factors, plasminogen or other matrix metalloproteinases such as MMP9. Once released into the extracellular matrix (ECM), the inactive pro-enzyme is activated by the plasmin cascade signaling pathway. Also acts intracellularly. For example, in dopaminergic neurons, gets activated by the serine protease HTRA2 upon stress and plays a pivotal role in DA neuronal degeneration by mediating microglial activation and alpha-synuclein/SNCA cleavage. In addition, plays a role in immune response and possesses antiviral activity against various viruses. Mechanistically, translocates from the cytoplasm into the cell nucleus upon virus infection to influence NF-kappa-B activities. The polypeptide is Stromelysin-1 (Mmp3) (Mus musculus (Mouse)).